A 206-amino-acid polypeptide reads, in one-letter code: Small ribosomal subunit protein uS4 (206 aa).

In terms of domain architecture, S4 RNA-binding spans 96 to 156 (GRLDNVVYRM…EKAKKQSRVK (61 aa)).

This sequence belongs to the universal ribosomal protein uS4 family. In terms of assembly, part of the 30S ribosomal subunit. Contacts protein S5. The interaction surface between S4 and S5 is involved in control of translational fidelity.

Functionally, one of the primary rRNA binding proteins, it binds directly to 16S rRNA where it nucleates assembly of the body of the 30S subunit. Its function is as follows. With S5 and S12 plays an important role in translational accuracy. The polypeptide is Small ribosomal subunit protein uS4 (Erwinia tasmaniensis (strain DSM 17950 / CFBP 7177 / CIP 109463 / NCPPB 4357 / Et1/99)).